The sequence spans 260 residues: ProSAAS (260 aa).

The signal sequence occupies residues 1 to 33 (MAGSPLLWGPRAGGVGLLVLLLLGLFRPPPALC). The proSAAS(1-180) stretch occupies residues 34 to 215 (ARPVKEPRGL…SADSEGVAAP (182 aa)). Residue Thr53 is glycosylated (O-linked (GalNAc...) threonine). The disordered stretch occupies residues 165–188 (RPRPPVYDDGPAGPDAEEAGDETP). The span at 179–188 (DAEEAGDETP) shows a compositional bias: acidic residues. The tract at residues 221–260 (AADHDVGSELPPEGVLGALLRVKRLETPAPQVPARRLLPP) is C-terminal inhibitory domain; interacts with PCSK1. Ser228 carries O-linked (GalNAc...) serine glycosylation. A Sufficient for inhibition of PCSK1 motif is present at residues 239–244 (LLRVKR). A glycan (O-linked (GalNAc...) threonine) is linked at Thr247.

Interacts via the C-terminal inhibitory domain with PCSK1 66 kDa form. Proteolytically cleaved in the Golgi. Post-translationally, O-glycosylated with a core 1 or possibly core 8 glycan. Expressed in brain and pancreas.

The protein localises to the secreted. Its subcellular location is the golgi apparatus. The protein resides in the trans-Golgi network. Its function is as follows. May function in the control of the neuroendocrine secretory pathway. Proposed be a specific endogenous inhibitor of PCSK1. ProSAAS and Big PEN-LEN, both containing the C-terminal inhibitory domain, but not the further processed peptides reduce PCSK1 activity in the endoplasmic reticulum and Golgi. It reduces the activity of the 84 kDa form but not the autocatalytically derived 66 kDa form of PCSK1. Subsequent processing of proSAAS may eliminate the inhibition. Slows down convertase-mediated processing of proopiomelanocortin and proenkephalin. May control the intracellular timing of PCSK1 rather than its total level of activity. Functionally, endogenous ligand for GPR171. Neuropeptide involved in the regulation of feeding. The polypeptide is ProSAAS (PCSK1N) (Homo sapiens (Human)).